The primary structure comprises 475 residues: Glycogen synthase (475 aa).

Residue Lys15 participates in ADP-alpha-D-glucose binding.

It belongs to the glycosyltransferase 1 family. Bacterial/plant glycogen synthase subfamily.

It catalyses the reaction [(1-&gt;4)-alpha-D-glucosyl](n) + ADP-alpha-D-glucose = [(1-&gt;4)-alpha-D-glucosyl](n+1) + ADP + H(+). It participates in glycan biosynthesis; glycogen biosynthesis. Its function is as follows. Synthesizes alpha-1,4-glucan chains using ADP-glucose. The sequence is that of Glycogen synthase from Clostridium kluyveri (strain ATCC 8527 / DSM 555 / NBRC 12016 / NCIMB 10680 / K1).